Here is a 423-residue protein sequence, read N- to C-terminus: 3-isopropylmalate dehydratase large subunit 1 (423 aa).

[4Fe-4S] cluster is bound by residues cysteine 302, cysteine 362, and cysteine 365.

Belongs to the aconitase/IPM isomerase family. LeuC type 2 subfamily. In terms of assembly, heterodimer of LeuC and LeuD. [4Fe-4S] cluster serves as cofactor.

The catalysed reaction is (2R,3S)-3-isopropylmalate = (2S)-2-isopropylmalate. The protein operates within amino-acid biosynthesis; L-leucine biosynthesis; L-leucine from 3-methyl-2-oxobutanoate: step 2/4. Catalyzes the isomerization between 2-isopropylmalate and 3-isopropylmalate, via the formation of 2-isopropylmaleate. The polypeptide is 3-isopropylmalate dehydratase large subunit 1 (Pyrococcus abyssi (strain GE5 / Orsay)).